Consider the following 311-residue polypeptide: Catabolite control protein B (311 aa).

The 56-residue stretch at 1 to 56 (MANIKEIARLANVSVSTVSRVLNHHPYVSEEKRKLVHQVMKELDYTPNRTAIDLIR) folds into the HTH lacI-type domain. A DNA-binding region (H-T-H motif) is located at residues 4–23 (IKEIARLANVSVSTVSRVLN).

In terms of assembly, seems to be complexed to phosphorylated HPr.

In terms of biological role, transcriptional regulator involved in catabolite repression of several operons. This Bacillus subtilis (strain 168) protein is Catabolite control protein B (ccpB).